A 248-amino-acid polypeptide reads, in one-letter code: Cell division protein ZapD (248 aa).

Belongs to the ZapD family. In terms of assembly, interacts with FtsZ.

It localises to the cytoplasm. In terms of biological role, cell division factor that enhances FtsZ-ring assembly. Directly interacts with FtsZ and promotes bundling of FtsZ protofilaments, with a reduction in FtsZ GTPase activity. This Aliivibrio fischeri (strain ATCC 700601 / ES114) (Vibrio fischeri) protein is Cell division protein ZapD.